The following is a 339-amino-acid chain: DNA-directed RNA polymerase subunit alpha (339 aa).

The interval 1–233 is alpha N-terminal domain (alpha-NTD); that stretch reads MVREEVAGST…DLFLPFLHAE (233 aa). Residues 264–339 form an alpha C-terminal domain (alpha-CTD) region; sequence KKGIPLNCIF…IDLLKNKLSF (76 aa).

Belongs to the RNA polymerase alpha chain family. As to quaternary structure, in plastids the minimal PEP RNA polymerase catalytic core is composed of four subunits: alpha, beta, beta', and beta''. When a (nuclear-encoded) sigma factor is associated with the core the holoenzyme is formed, which can initiate transcription.

The protein resides in the plastid. The protein localises to the chloroplast. The catalysed reaction is RNA(n) + a ribonucleoside 5'-triphosphate = RNA(n+1) + diphosphate. DNA-dependent RNA polymerase catalyzes the transcription of DNA into RNA using the four ribonucleoside triphosphates as substrates. In Festucopsis serpentini, this protein is DNA-directed RNA polymerase subunit alpha.